The chain runs to 390 residues: Protein SOSEKI 4 (390 aa).

The interval 22–115 (RMAEVLYVLS…YALKATKRFD (94 aa)) is DIX-like oligomerization domain. Disordered stretches follow at residues 210–247 (KSNS…NRTG) and 291–321 (RESN…SGGS). A compositionally biased stretch (polar residues) spans 304-321 (PSVQAETHVSKLSKSGGS).

This sequence belongs to the SOSEKI family. Homodimer. Forms long polymer filaments with other SOKs proteins polymers crucial for polar localization and biological activity.

The protein localises to the cell membrane. In terms of biological role, SOSEKI proteins locally interpret global polarity cues and can influence cell division orientation to coordinate cell polarization relative to body axes. The sequence is that of Protein SOSEKI 4 from Physcomitrium patens (Spreading-leaved earth moss).